Here is a 519-residue protein sequence, read N- to C-terminus: Na(+)/H(+) exchange regulatory cofactor NHE-RF3 (519 aa).

PDZ domains are found at residues 9 to 90 (ECKL…LDGD), 134 to 215 (RLCY…VDKE), and 243 to 323 (IVEM…VDKE). Phosphoserine is present on residues S148, S192, S250, S334, and S348. Residues 347 to 374 (GSVKEAPAPTPTSLEVSSPPDTTEEVDH) form a disordered region. Over residues 357–367 (PTSLEVSSPPD) the composition is skewed to polar residues. A PDZ 4 domain is found at 378–458 (LCRLAKGENG…NVTLLVCGKK (81 aa)). T451 bears the Phosphothreonine mark. Positions 473–519 (SLADPPDTPPDSKEGIVVESKHDSHMAKERAHSTASHSSSNSEDTEM) are disordered. Over residues 482–504 (PDSKEGIVVESKHDSHMAKERAH) the composition is skewed to basic and acidic residues. Phosphoserine is present on residues S492, S508, S510, S511, S512, and S514. Over residues 505-519 (STASHSSSNSEDTEM) the composition is skewed to low complexity.

This sequence belongs to the NHER family. As to quaternary structure, interacts with PDZK1IP1 and ABCC2. Binds to the C-terminal region of SLC26A3. Interacts (via PDZ domains 1 and 3) with SCARB1 (C-terminal domain). Forms a heterodimeric complex with NHERF1. Interacts with AKAP2, BCR, CFTR, SLCO1A1, SLC22A12, SLC22A4, SLC22A5, NHERF2 and SLC17A1. Component of a complex, composed of PDZK1, SYNGAP1, KLHL17 and NMDA receptors. Interacts (via PDZ1 domain) directly with KLHL17; the interaction is important for integrity of actin cytoskeleton structures in neurons. Interacts (via C-terminal PDZ domain) with SLC26A6 (via C-terminal domain). Interacts (via C-terminal PDZ domain) with SLC9A3 (via C-terminal domain). Interacts (via the first PDZ domain) with PTGIR (via non-isoprenylated C-terminus). Interacts (via PDZ domains 1 and 3) with SLC5A8 (via PDZ-binding motif); interaction increases nicotinate transport activity of SLC5A8.

It is found in the membrane. The protein localises to the cell membrane. In terms of biological role, a scaffold protein that connects plasma membrane proteins and regulatory components, regulating their surface expression in epithelial cells apical domains. May be involved in the coordination of a diverse range of regulatory processes for ion transport and second messenger cascades. In complex with NHERF1, may cluster proteins that are functionally dependent in a mutual fashion and modulate the trafficking and the activity of the associated membrane proteins. May play a role in the cellular mechanisms associated with multidrug resistance through its interaction with ABCC2 and PDZK1IP1. May potentiate the CFTR chloride channel activity. Required for normal cell-surface expression of SCARB1. Plays a role in maintaining normal plasma cholesterol levels via its effects on SCARB1. Plays a role in the normal localization and function of the chloride-anion exchanger SLC26A6 to the plasma membrane in the brush border of the proximal tubule of the kidney. May be involved in the regulation of proximal tubular Na(+)-dependent inorganic phosphate cotransport therefore playing an important role in tubule function. This Pongo abelii (Sumatran orangutan) protein is Na(+)/H(+) exchange regulatory cofactor NHE-RF3 (PDZK1).